The sequence spans 217 residues: Glycerol-3-phosphate acyltransferase (217 aa).

The next 5 membrane-spanning stretches (helical) occupy residues 1–21, 54–74, 84–104, 126–146, and 165–185; these read MAWAISGLLVILGYLLGSIPT, TAAIAVLIIDMLKAMVAVGGV, AIVPLDWKPWLIVTVASAAIL, VLLVLNPLVALGALASFLFML, and LLMLVLHQPLAYILFAILAGI.

The protein belongs to the PlsY family. In terms of assembly, probably interacts with PlsX.

It is found in the cell inner membrane. The enzyme catalyses an acyl phosphate + sn-glycerol 3-phosphate = a 1-acyl-sn-glycero-3-phosphate + phosphate. The protein operates within lipid metabolism; phospholipid metabolism. In terms of biological role, catalyzes the transfer of an acyl group from acyl-phosphate (acyl-PO(4)) to glycerol-3-phosphate (G3P) to form lysophosphatidic acid (LPA). This enzyme utilizes acyl-phosphate as fatty acyl donor, but not acyl-CoA or acyl-ACP. This Rippkaea orientalis (strain PCC 8801 / RF-1) (Cyanothece sp. (strain PCC 8801)) protein is Glycerol-3-phosphate acyltransferase.